Here is a 223-residue protein sequence, read N- to C-terminus: UPF0173 metal-dependent hydrolase Amet_4625 (223 aa).

The protein belongs to the UPF0173 family.

This Alkaliphilus metalliredigens (strain QYMF) protein is UPF0173 metal-dependent hydrolase Amet_4625.